A 509-amino-acid chain; its full sequence is Seipin-3 (509 aa).

The segment at 33-73 (YDCLNSSPPANLRRRRLPMDTDSSSSSSTSSLESCEKRSTV) is disordered. Residues 52–63 (DTDSSSSSSTSS) show a composition bias toward low complexity. 2 consecutive transmembrane segments (helical) span residues 238-258 (LFCA…AFMI) and 455-475 (LFVW…LVFF).

The protein belongs to the seipin family. Expressed in seeds, seedlings, leaves, stems and roots. Not detected in flowers.

The protein localises to the endoplasmic reticulum membrane. In terms of biological role, involved in lipid metabolism and lipid droplet (LD) morphology, number, and size. Supports the formation of small-sized LDs and modulates triacylglycerol accumulation. Induces probably a reorganization of the endoplasmic reticulum into LD-forming domains. This is Seipin-3 from Arabidopsis thaliana (Mouse-ear cress).